Consider the following 417-residue polypeptide: FK506-binding protein 3 (417 aa).

2 disordered regions span residues 42–129 (SLDD…LSPE) and 191–307 (EGCG…DKPK). Composition is skewed to acidic residues over residues 61–84 (FDDE…EESE), 99–120 (SEEE…EFEE), and 197–222 (CACD…DASD). Composition is skewed to basic and acidic residues over residues 236–249 (ANEK…EPKA) and 256–307 (DQKD…DKPK). In terms of domain architecture, PPIase FKBP-type spans 331–417 (GARVGMRYIG…TFDVKLVSLK (87 aa)).

This sequence belongs to the FKBP-type PPIase family. FKBP3/4 subfamily.

Its subcellular location is the nucleus. It is found in the nucleolus. The enzyme catalyses [protein]-peptidylproline (omega=180) = [protein]-peptidylproline (omega=0). Its activity is regulated as follows. Inhibited by both FK506 and rapamycin. Functionally, PPIases accelerate the folding of proteins. It catalyzes the cis-trans isomerization of proline imidic peptide bonds in oligopeptides. The protein is FK506-binding protein 3 (FPR3) of Eremothecium gossypii (strain ATCC 10895 / CBS 109.51 / FGSC 9923 / NRRL Y-1056) (Yeast).